The following is a 315-amino-acid chain: Cobalamin biosynthesis protein CobD (315 aa).

The next 5 helical transmembrane spans lie at 54–74 (GLLFVLTVGMTGVVSWFILFL), 78–98 (IAYWLYVAVFVYLGYTTLAMT), 152–172 (ADGVIAPLFYLFIGGPVLALM), 203–223 (IANFIPARLAWFFLVIASFIL), and 295–315 (LLYTASTIAFIIFASIYLLLF).

This sequence belongs to the CobD/CbiB family.

The protein localises to the cell membrane. Its pathway is cofactor biosynthesis; adenosylcobalamin biosynthesis. In terms of biological role, converts cobyric acid to cobinamide by the addition of aminopropanol on the F carboxylic group. This is Cobalamin biosynthesis protein CobD from Listeria monocytogenes serotype 4b (strain F2365).